We begin with the raw amino-acid sequence, 240 residues long: Protein MGARP (240 aa).

The Cytoplasmic portion of the chain corresponds to 1-45 (MYLRRAVSKTLALPLRAPPGPAPLRKDASLRWISSNKFPGSSGSN). The chain crosses the membrane as a helical; Anchor for type IV membrane protein span at residues 46 to 64 (MIYYLVVGVTVSAGGYYTY). Residues 65–240 (KRVTSGKAKR…AGSEAASAQG (176 aa)) are Mitochondrial intermembrane-facing. A disordered region spans residues 72–240 (AKRSDHVTDL…AGSEAASAQG (169 aa)). Basic and acidic residues predominate over residues 73–87 (KRSDHVTDLKEKTKA). Low complexity-rich tracts occupy residues 166 to 183 (TVET…VTST) and 228 to 240 (EACA…SAQG).

In terms of assembly, interacts with RHOT1/Miro-1, RHOT2/Miro-2, TRAK1/OIP106 and TRAK2/GRIF1.

The protein localises to the mitochondrion. The protein resides in the mitochondrion outer membrane. It is found in the mitochondrion inner membrane. Plays a role in the trafficking of mitochondria along microtubules. Regulates the kinesin-mediated axonal transport of mitochondria to nerve terminals along microtubules during hypoxia. Participates in the translocation of TRAK2/GRIF1 from the cytoplasm to the mitochondrion. Also plays a role in steroidogenesis through maintenance of mitochondrial abundance and morphology. Plays an inhibitory role during neocortex development by regulating mitochondrial morphology, distribution and motility in neocortical neurons. The chain is Protein MGARP (MGARP) from Bos taurus (Bovine).